The sequence spans 422 residues: MAM and fibronectin type III domain-containing protein 1 (422 aa).

The region spanning 1-75 is the MAM domain; that stretch reads KFYYHMYGAT…VSLMEGICAG (75 aa). 3 Fibronectin type-III domains span residues 2–74, 196–286, and 291–386; these read FYYH…GICA, PGWN…QART, and PSRA…YIVT.

As to expression, component of the acid-insoluble and acid-soluble organic matrix of the aragonitic skeleton (at protein level).

It localises to the secreted. The polypeptide is MAM and fibronectin type III domain-containing protein 1 (Acropora millepora (Staghorn coral)).